A 550-amino-acid polypeptide reads, in one-letter code: Formin-binding protein 1-like (550 aa).

In terms of domain architecture, F-BAR spans 1 to 263 (MSWGTELWDQ…AAKSVDERRD (263 aa)). 2 coiled-coil regions span residues 66–258 (FTSC…AKSV) and 334–426 (LEDF…QRSE). The REM-1 domain occupies 339-416 (HLPPEQRRKR…IHKNEAWLSE (78 aa)). The segment covering 423–432 (QRSERRHSAE) has biased composition (basic and acidic residues). Residues 423 to 467 (QRSERRHSAEANHLVAQGRESPEGSYTEDANQEGRVQPQPHAHPE) are disordered. The region spanning 479–540 (PAIGHCKSLY…PTSYIDITLE (62 aa)) is the SH3 domain.

The protein belongs to the FNBP1 family. As to quaternary structure, homodimerizes, the dimers can polymerize end-to-end to form filamentous structures. Interacts with GTP-bound cdc42 and wasl/n-wasp.

The protein localises to the cytoplasm. Its subcellular location is the cytoskeleton. It localises to the cell cortex. The protein resides in the cytoplasmic vesicle. It is found in the cell membrane. Its function is as follows. Required to coordinate membrane tubulation with reorganization of the actin cytoskeleton during endocytosis. Promotes cdc42-induced actin polymerization by activating the wasl-waspip complex, the predominant form of wasl/n-wasp in cells. Essential for autophagy of intracellular bacterial pathogens. In Xenopus tropicalis (Western clawed frog), this protein is Formin-binding protein 1-like (fnbp1l).